Here is a 153-residue protein sequence, read N- to C-terminus: Cytochrome c-type biogenesis protein CcmE (153 aa).

Over 1–8 (MTTRRGRR) the chain is Cytoplasmic. Residues 9–29 (ALLIAGGVGLLALAAALVLNA) form a helical; Signal-anchor for type II membrane protein membrane-spanning segment. The Periplasmic portion of the chain corresponds to 30–153 (LRSNLVFFFS…PSATLQTEAR (124 aa)). Residues histidine 124 and tyrosine 128 each coordinate heme.

This sequence belongs to the CcmE/CycJ family.

The protein localises to the cell inner membrane. Heme chaperone required for the biogenesis of c-type cytochromes. Transiently binds heme delivered by CcmC and transfers the heme to apo-cytochromes in a process facilitated by CcmF and CcmH. The polypeptide is Cytochrome c-type biogenesis protein CcmE (Bordetella parapertussis (strain 12822 / ATCC BAA-587 / NCTC 13253)).